The chain runs to 130 residues: Small ribosomal subunit protein uS11 (130 aa).

It belongs to the universal ribosomal protein uS11 family. In terms of assembly, part of the 30S ribosomal subunit. Interacts with proteins S7 and S18. Binds to IF-3.

Its function is as follows. Located on the platform of the 30S subunit, it bridges several disparate RNA helices of the 16S rRNA. Forms part of the Shine-Dalgarno cleft in the 70S ribosome. This Gloeothece citriformis (strain PCC 7424) (Cyanothece sp. (strain PCC 7424)) protein is Small ribosomal subunit protein uS11.